A 703-amino-acid chain; its full sequence is Polyribonucleotide nucleotidyltransferase (703 aa).

2 residues coordinate Mg(2+): D489 and D495. The 60-residue stretch at 556–615 (PTMIAMKIDTDKIRDVIGKGGATIRAICEETKASIDIEDDGSIKIFGETKEAAEAARQRV) folds into the KH domain. One can recognise an S1 motif domain in the interval 625–693 (GKIYVGKVER…NRGRIKLSIK (69 aa)).

It belongs to the polyribonucleotide nucleotidyltransferase family. Component of the RNA degradosome, which is a multiprotein complex involved in RNA processing and mRNA degradation. Mg(2+) is required as a cofactor.

Its subcellular location is the cytoplasm. The enzyme catalyses RNA(n+1) + phosphate = RNA(n) + a ribonucleoside 5'-diphosphate. Functionally, involved in mRNA degradation. Catalyzes the phosphorolysis of single-stranded polyribonucleotides processively in the 3'- to 5'-direction. This chain is Polyribonucleotide nucleotidyltransferase, found in Pseudomonas fluorescens (strain ATCC BAA-477 / NRRL B-23932 / Pf-5).